Consider the following 598-residue polypeptide: Dihydroxy-acid dehydratase astD, mitochondrial (598 aa).

Residues 1–111 (MFASRIRSRA…HRAGLVPMRF (111 aa)) constitute a mitochondrion transit peptide. The disordered stretch occupies residues 23-50 (RLPASTTGRRYKSDETLNRVSSKITQPK). Residues 40–50 (NRVSSKITQPK) show a composition bias toward polar residues. Cys-86 is a binding site for [2Fe-2S] cluster. Asp-118 lines the Mg(2+) pocket. Cys-159 contacts [2Fe-2S] cluster. Asp-160 is a Mg(2+) binding site. Position 232 (Cys-232) interacts with [2Fe-2S] cluster. Glu-485 lines the Mg(2+) pocket. The active-site Proton acceptor is Ser-511.

Belongs to the IlvD/Edd family. [2Fe-2S] cluster is required as a cofactor. Mg(2+) serves as cofactor.

Its subcellular location is the mitochondrion. The enzyme catalyses (2R)-2,3-dihydroxy-3-methylbutanoate = 3-methyl-2-oxobutanoate + H2O. The catalysed reaction is (2R,3R)-2,3-dihydroxy-3-methylpentanoate = (S)-3-methyl-2-oxopentanoate + H2O. The protein operates within amino-acid biosynthesis; L-isoleucine biosynthesis; L-isoleucine from 2-oxobutanoate: step 3/4. It functions in the pathway amino-acid biosynthesis; L-valine biosynthesis; L-valine from pyruvate: step 3/4. Its activity is regulated as follows. DHAD activity is not inhibited by the dihydroxyacid dehydratase inhibitor aspterric acid (AA). In terms of biological role, dihydroxyacid dehydratase; part of the gene cluster that mediates the biosynthesis of the sesquiterpenoid aspterric acid (AA), an inhibitor of dihydroxy-acid dehydratase (DHAD) effective as an herbicide. Performs the third step in the common pathway leading to biosynthesis of branched-chain amino acids. Catalyzes the dehydration of (2R,3R)-2,3-dihydroxy-3-methylpentanoate (2,3-dihydroxy-3-methylvalerate) into 2-oxo-3-methylpentanoate (2-oxo-3-methylvalerate) and of (2R)-2,3-dihydroxy-3-methylbutanoate (2,3-dihydroxyisovalerate) into 2-oxo-3-methylbutanoate (2-oxoisovalerate), the penultimate precursor to L-isoleucine and L-valine, respectively. AstD confers self-resistance in the presence of the dihydroxyacid dehydratase inhibitor aspterric acid (AA) produced by the ast cluster. This Aspergillus terreus (strain NIH 2624 / FGSC A1156) protein is Dihydroxy-acid dehydratase astD, mitochondrial.